A 1033-amino-acid polypeptide reads, in one-letter code: Ubiquitin carboxyl-terminal hydrolase 48 (1033 aa).

A USP domain is found at 89-419; the sequence is VGLTNLGATC…NAYMLVYRLQ (331 aa). Cys-98 acts as the Nucleophile in catalysis. Residue His-351 is the Proton acceptor of the active site. DUSP domains lie at 457 to 552, 567 to 690, and 710 to 823; these read QSVA…KALC, NQLN…NKEC, and MMAS…RTRA. The disordered stretch occupies residues 610–639; that stretch reads EQDEDAEHSNGKLNGNAPNKDEVNEEKREE. The disordered stretch occupies residues 878–920; sequence APELNVSSSEAEEEREENKPEGEQDPDFNQSNGGAKRQKLSHQ. Positions 931–1007 constitute a Ubiquitin-like domain; the sequence is RRSTRHRKVR…ILLKADEPIA (77 aa).

The protein belongs to the peptidase C19 family.

It is found in the cytoplasm. It localises to the nucleus. It catalyses the reaction Thiol-dependent hydrolysis of ester, thioester, amide, peptide and isopeptide bonds formed by the C-terminal Gly of ubiquitin (a 76-residue protein attached to proteins as an intracellular targeting signal).. In terms of biological role, recognizes and hydrolyzes the peptide bond at the C-terminal Gly of ubiquitin. Involved in the processing of poly-ubiquitin precursors as well as that of ubiquitinated proteins. In Gallus gallus (Chicken), this protein is Ubiquitin carboxyl-terminal hydrolase 48 (USP48).